The following is a 221-amino-acid chain: Guanylate kinase (221 aa).

The 180-residue stretch at 20 to 199 (GLMFILSSPS…CFGKVREILA (180 aa)) folds into the Guanylate kinase-like domain. 27-34 (SPSGAGKT) lines the ATP pocket.

The protein belongs to the guanylate kinase family.

Its subcellular location is the cytoplasm. The enzyme catalyses GMP + ATP = GDP + ADP. Essential for recycling GMP and indirectly, cGMP. The chain is Guanylate kinase from Novosphingobium aromaticivorans (strain ATCC 700278 / DSM 12444 / CCUG 56034 / CIP 105152 / NBRC 16084 / F199).